The chain runs to 335 residues: Phosphate acyltransferase (335 aa).

The protein belongs to the PlsX family. As to quaternary structure, homodimer. Probably interacts with PlsY.

It is found in the cytoplasm. The catalysed reaction is a fatty acyl-[ACP] + phosphate = an acyl phosphate + holo-[ACP]. The protein operates within lipid metabolism; phospholipid metabolism. Catalyzes the reversible formation of acyl-phosphate (acyl-PO(4)) from acyl-[acyl-carrier-protein] (acyl-ACP). This enzyme utilizes acyl-ACP as fatty acyl donor, but not acyl-CoA. This is Phosphate acyltransferase from Streptococcus equi subsp. zooepidemicus (strain H70).